Reading from the N-terminus, the 644-residue chain is MISSISLSQDKCKYLLYNNLLVDERENFLVSLTCSYILFQKTIPYIQNVSTLYDKVWDDHVIDQQEDGTCLIYIDRHLVHEVTSPQAFEGLRNANRPVRRPDCTLATVDHNIPTTTRKIFKNITTFIKEADSRTQCETLEQNIEAFGLTYFGMEDSRQGIVHVIGPEQGFTLPATTVVCGDSHTSTHGAFGALAFGIGTSEVEHVLATQTLLQKKSKNMRIRVQGKALPGVTSKDIVLHIIGVIGTAGGTGCVIEFCGDTIAALSMESRMSICNMSIEAGARAGMVAPDEVTFEYLRDKPLAPKGADWDRAVKYWKSLSSDADAKYDINVEINAADIAPTLTWGTSPQDVVPITGSTPDPAKIEDPIRRSAVQRALDYIGIAPNTPMEGVKVDKVFIGSCTNSRIEDLRAAAAVVKGKRAAEWVDAMVVPGSGLVKRQAEREGLDKIFTDAGFDWREAGCSMCLGMNPDQLKPGERCASTSNRNFEGRQGAGGRTHLVSPAMAAAAGIKGCLTDVRNMEVSEIPGTPKQSPRQEVVAEFESEEDDVDSSSVDSAPVATPPSTGDSAGMPKFTTLKGYAAPLDISNVDTDMIIPKQFLKTIKRTGLGSALFYALRFDPATGAENPDFVLNLRALPSRTYLGLHRS.

Positions 400, 460, and 463 each coordinate [4Fe-4S] cluster. The interval 521–568 is disordered; that stretch reads SEIPGTPKQSPRQEVVAEFESEEDDVDSSSVDSAPVATPPSTGDSAGM. A compositionally biased stretch (acidic residues) spans 537–547; sequence AEFESEEDDVD.

This sequence belongs to the aconitase/IPM isomerase family. Monomer. Requires [4Fe-4S] cluster as cofactor.

The enzyme catalyses (2R,3S)-3-isopropylmalate = (2S)-2-isopropylmalate. It participates in amino-acid biosynthesis; L-leucine biosynthesis; L-leucine from 3-methyl-2-oxobutanoate: step 2/4. Its function is as follows. Catalyzes the isomerization between 2-isopropylmalate and 3-isopropylmalate, via the formation of 2-isopropylmaleate. The sequence is that of 3-isopropylmalate dehydratase (LEUA) from Mucor circinelloides f. lusitanicus (Mucor racemosus var. lusitanicus).